The primary structure comprises 272 residues: 2-amino-3,7-dideoxy-D-threo-hept-6-ulosonate synthase (272 aa).

Catalysis depends on Asp-33, which acts as the Proton acceptor. Residues 33 to 37 and 153 to 155 each bind 1-deoxy-D-threo-hexo-2,5-diulose 6-phosphate; these read DHGVS and YPR. The active-site Proton donor is Tyr-153. The active-site Schiff-base intermediate with substrate is Lys-184. Residues 209–210 and 237–238 contribute to the 1-deoxy-D-threo-hexo-2,5-diulose 6-phosphate site; these read GG and GR.

It belongs to the DeoC/FbaB aldolase family. ADHS subfamily. In terms of assembly, homodecamer.

It carries out the reaction 1-deoxy-D-threo-hexo-2,5-diulose 6-phosphate + L-aspartate 4-semialdehyde = 2,3-dioxopropyl phosphate + 2-amino-2,3,7-trideoxy-D-lyxo-hept-6-ulosonate. In terms of biological role, catalyzes a transaldol reaction between 6-deoxy-5-ketofructose 1-phosphate (DKFP) and L-aspartate semialdehyde (ASA) with an elimination of hydroxypyruvaldehyde phosphate to yield 2-amino-3,7-dideoxy-D-threo-hept-6-ulosonate (ADH). Plays a key role in an alternative pathway of the biosynthesis of 3-dehydroquinate (DHQ), which is involved in the canonical pathway for the biosynthesis of aromatic amino acids. The chain is 2-amino-3,7-dideoxy-D-threo-hept-6-ulosonate synthase from Methanococcus vannielii (strain ATCC 35089 / DSM 1224 / JCM 13029 / OCM 148 / SB).